The primary structure comprises 138 residues: ATP synthase epsilon chain (138 aa).

The protein belongs to the ATPase epsilon chain family. In terms of assembly, F-type ATPases have 2 components, CF(1) - the catalytic core - and CF(0) - the membrane proton channel. CF(1) has five subunits: alpha(3), beta(3), gamma(1), delta(1), epsilon(1). CF(0) has three main subunits: a, b and c.

It is found in the cell inner membrane. Its function is as follows. Produces ATP from ADP in the presence of a proton gradient across the membrane. This Blochmanniella floridana protein is ATP synthase epsilon chain.